The sequence spans 490 residues: Argininosuccinate lyase (490 aa).

The protein belongs to the lyase 1 family. Argininosuccinate lyase subfamily.

Its subcellular location is the cytoplasm. It catalyses the reaction 2-(N(omega)-L-arginino)succinate = fumarate + L-arginine. Its pathway is amino-acid biosynthesis; L-arginine biosynthesis; L-arginine from L-ornithine and carbamoyl phosphate: step 3/3. The sequence is that of Argininosuccinate lyase from Bifidobacterium longum (strain DJO10A).